We begin with the raw amino-acid sequence, 611 residues long: Autophagy-related protein 22-2 (611 aa).

Residues 1 to 24 (MRADDNPSARSLHAQFPGDDTRPT) form a disordered region. A helical membrane pass occupies residues 35 to 55 (YGWAAEVFTVCAMGSFLPITL). A glycan (N-linked (GlcNAc...) asparagine) is linked at asparagine 78. Transmembrane regions (helical) follow at residues 116–136 (TASF…VLII), 151–171 (LLVA…SVVP), and 175–195 (IVGA…FVLL). Asparagine 221 carries an N-linked (GlcNAc...) asparagine glycan. 2 consecutive transmembrane segments (helical) span residues 286–306 (IGIG…VIIA) and 316–336 (LVLF…ALWL). N-linked (GlcNAc...) asparagine glycosylation occurs at asparagine 353. The next 6 helical transmembrane spans lie at 380 to 400 (ILLF…VSGT), 414 to 434 (AALG…AFSW), 449 to 469 (IIAC…GFVP), 483 to 503 (WEMF…SSYC), 521 to 541 (ALYA…VGLI), and 551 to 571 (AFVF…LVDV).

The protein belongs to the ATG22 family.

The protein localises to the vacuole membrane. In terms of biological role, vacuolar effluxer which mediate the efflux of amino acids resulting from autophagic degradation. The release of autophagic amino acids allows the maintenance of protein synthesis and viability during nitrogen starvation. The chain is Autophagy-related protein 22-2 (atg22-2) from Aspergillus clavatus (strain ATCC 1007 / CBS 513.65 / DSM 816 / NCTC 3887 / NRRL 1 / QM 1276 / 107).